The following is a 187-amino-acid chain: Guanylate kinase (187 aa).

Ser2 bears the N-acetylserine mark. Residues 2–184 (SRPIVISGPS…AYKELKDFIF (183 aa)) form the Guanylate kinase-like domain. An ATP-binding site is contributed by 9–16 (GPSGTGKS). GMP-binding positions include Ser35, 39 to 42 (RTPR), Tyr51, Glu70, 79 to 81 (YGS), and Asp101. Ser149 carries the post-translational modification Phosphoserine. Tyr157 carries the post-translational modification Phosphotyrosine.

This sequence belongs to the guanylate kinase family. As to quaternary structure, monomer.

It catalyses the reaction GMP + ATP = GDP + ADP. Functionally, catalyzes the reversible transfer of the terminal phosphoryl group of ATP to the acceptor molecule GMP. Essential for recycling GMP and indirectly, cGMP. The protein is Guanylate kinase (GUK1) of Saccharomyces cerevisiae (strain ATCC 204508 / S288c) (Baker's yeast).